The chain runs to 391 residues: ATP phosphoribosyltransferase regulatory subunit (391 aa).

The protein belongs to the class-II aminoacyl-tRNA synthetase family. HisZ subfamily. In terms of assembly, heteromultimer composed of HisG and HisZ subunits.

The protein localises to the cytoplasm. It participates in amino-acid biosynthesis; L-histidine biosynthesis; L-histidine from 5-phospho-alpha-D-ribose 1-diphosphate: step 1/9. Required for the first step of histidine biosynthesis. May allow the feedback regulation of ATP phosphoribosyltransferase activity by histidine. This chain is ATP phosphoribosyltransferase regulatory subunit, found in Prochlorococcus marinus (strain SARG / CCMP1375 / SS120).